Here is a 140-residue protein sequence, read N- to C-terminus: Large ribosomal subunit protein uL11 (140 aa).

This sequence belongs to the universal ribosomal protein uL11 family. In terms of assembly, part of the ribosomal stalk of the 50S ribosomal subunit. Interacts with L10 and the large rRNA to form the base of the stalk. L10 forms an elongated spine to which L12 dimers bind in a sequential fashion forming a multimeric L10(L12)X complex. One or more lysine residues are methylated.

Forms part of the ribosomal stalk which helps the ribosome interact with GTP-bound translation factors. This chain is Large ribosomal subunit protein uL11, found in Dehalococcoides mccartyi (strain ATCC BAA-2100 / JCM 16839 / KCTC 5957 / BAV1).